Consider the following 623-residue polypeptide: Negative regulator of PDR1-mediated fluconazole resistance JJJ1 (623 aa).

The J domain maps to 4-70; that stretch reads CYYDLLEVRS…QERAWYDSHK (67 aa). The C2H2-type zinc finger occupies 363–387; sequence YDCFICKKSFKSEKQLENHIKTKLH. 3 disordered regions span residues 448-476, 499-581, and 599-623; these read QSSV…KLSN, GADN…NDAK, and SHIQ…KKNK. Over residues 453 to 466 the composition is skewed to acidic residues; it reads DSEDFTDDNNDTED. A compositionally biased stretch (polar residues) spans 499-508; that stretch reads GADNSETQNA. A compositionally biased stretch (basic and acidic residues) spans 525–538; that stretch reads ELTRILRELEESKT. Composition is skewed to basic residues over residues 553 to 564 and 612 to 623; these read KKKTKAKKKKNK and KVKKGKRSKKNK.

The protein localises to the nucleus. Acts as a negative regulator of fluconazole resistance, primarily through down-regulation of the ABC transporter gene CDR1 via inactivation of the PDR1 transcriptional pathway. In Candida glabrata (strain ATCC 2001 / BCRC 20586 / JCM 3761 / NBRC 0622 / NRRL Y-65 / CBS 138) (Yeast), this protein is Negative regulator of PDR1-mediated fluconazole resistance JJJ1.